Here is an 85-residue protein sequence, read N- to C-terminus: Translation initiation factor IF-1 (85 aa).

The S1-like domain occupies 1–72 (MAKEELLEMR…TKARITYRFM (72 aa)).

This sequence belongs to the IF-1 family. In terms of assembly, component of the 30S ribosomal translation pre-initiation complex which assembles on the 30S ribosome in the order IF-2 and IF-3, IF-1 and N-formylmethionyl-tRNA(fMet); mRNA recruitment can occur at any time during PIC assembly.

It localises to the cytoplasm. Its function is as follows. One of the essential components for the initiation of protein synthesis. Stabilizes the binding of IF-2 and IF-3 on the 30S subunit to which N-formylmethionyl-tRNA(fMet) subsequently binds. Helps modulate mRNA selection, yielding the 30S pre-initiation complex (PIC). Upon addition of the 50S ribosomal subunit IF-1, IF-2 and IF-3 are released leaving the mature 70S translation initiation complex. The chain is Translation initiation factor IF-1 from Erythrobacter litoralis (strain HTCC2594).